The sequence spans 557 residues: UvrABC system protein C (557 aa).

Positions 14–89 constitute a GIY-YIG domain; sequence EEPGVYIFKN…IKKYRPKYNV (76 aa). Positions 194-229 constitute a UVR domain; the sequence is EEVFDYLKEKMETHSRMLDFENAAKYRDLLLNLSNV.

This sequence belongs to the UvrC family. In terms of assembly, interacts with UvrB in an incision complex.

It is found in the cytoplasm. Functionally, the UvrABC repair system catalyzes the recognition and processing of DNA lesions. UvrC both incises the 5' and 3' sides of the lesion. The N-terminal half is responsible for the 3' incision and the C-terminal half is responsible for the 5' incision. The chain is UvrABC system protein C from Thermotoga petrophila (strain ATCC BAA-488 / DSM 13995 / JCM 10881 / RKU-1).